Reading from the N-terminus, the 447-residue chain is MGLSFFSKHLPIQEGQPWASKTPADIISTVEFNHTGELLATGDKGGRVVIFQREPESKNAPHSQGEYDVYSTFQSHEPEFDYLKSLEIEEKINKIKWLPQQNAAHSLLSTNDKTIKLWKITERDKRPEGYNLKDEEGKLKDLSTVTSLQVPVLKPMDLMVEVSPRRIFANGHTYHINSISVNSDCETYMSADDLRINLWHLAITDRSFNIVDIKPANMEDLTEVITASEFHPHHCNLFVYSSSKGSLRLCDMRAAALCDKHSKLFEEPEDPSNRSFFSEIISSVSDVKFSHSGRYMLTRDYLTVKVWDLNMEARPIETYQVHDYLRSKLCSLYENDCIFDKFECAWNGSDSVIMTGAYNNFFRMFDRNTKRDVTLEASRESSKPRAVLKPRRVCVGGKRRRDDISVDSLDFTKKILHTAWHPAENIIAIAATNNLYIFQDKVNSDMH.

7 WD repeats span residues 22–61, 87–128, 171–209, 220–260, 279–317, 334–375, and 410–446; these read TPAD…KNAP, EIEE…KRPE, GHTY…RSFN, DLTE…LCDK, EIIS…RPIE, ENDC…DVTL, and DFTK…NSDM.

It belongs to the phosphatase 2A regulatory subunit B family. In terms of assembly, PP2A consists of a common heterodimeric core enzyme, composed of a 36 kDa catalytic subunit (subunit C) and a 65 kDa constant regulatory subunit (PR65 or subunit A), that associates with a variety of regulatory subunits. Proteins that associate with the core dimer include three families of regulatory subunits B (the R2/B/PR55/B55, R3/B''/PR72/PR130/PR59 and R5/B'/B56 families), the 48 kDa variable regulatory subunit, viral proteins, and cell signaling molecules. Interacts with IER5.

The B regulatory subunit might modulate substrate selectivity and catalytic activity, and might also direct the localization of the catalytic enzyme to a particular subcellular compartment. The chain is Serine/threonine-protein phosphatase 2A 55 kDa regulatory subunit B gamma isoform (PPP2R2C) from Macaca fascicularis (Crab-eating macaque).